The following is a 232-amino-acid chain: MIYDFLLSLGFISRIPINIKVKAFEVRVKRLPIYFPLVGYIPGILFFFGGSFENFLLKILFLILGYYFFDLFHFDGFLDTLDGFLNQSSKEKRLEIMSKGDVGPFAVFFGTLYVVVFWTLYLEIPPITFIYSSVFGRYSMNLLMFFSKPAKKTGLGALFFPFQKKNLLFSSFFLLPLLFSMKYFFISYVVTVVFSYLMSIVSNSKIGGVTGDVLGGACLMTNGLLLVVLGVV.

6 helical membrane passes run 32–52 (PIYFPLVGYIPGILFFFGGSF), 54–74 (NFLLKILFLILGYYFFDLFHF), 102–122 (VGPFAVFFGTLYVVVFWTLYL), 126–146 (PITFIYSSVFGRYSMNLLMFF), 172–192 (FFLLPLLFSMKYFFISYVVTV), and 212–232 (DVLGGACLMTNGLLLVVLGVV).

The protein belongs to the CobS family. Mg(2+) is required as a cofactor.

It is found in the cell inner membrane. The catalysed reaction is alpha-ribazole + adenosylcob(III)inamide-GDP = adenosylcob(III)alamin + GMP + H(+). The enzyme catalyses alpha-ribazole 5'-phosphate + adenosylcob(III)inamide-GDP = adenosylcob(III)alamin 5'-phosphate + GMP + H(+). It functions in the pathway cofactor biosynthesis; adenosylcobalamin biosynthesis; adenosylcobalamin from cob(II)yrinate a,c-diamide: step 7/7. In terms of biological role, joins adenosylcobinamide-GDP and alpha-ribazole to generate adenosylcobalamin (Ado-cobalamin). Also synthesizes adenosylcobalamin 5'-phosphate from adenosylcobinamide-GDP and alpha-ribazole 5'-phosphate. The chain is Adenosylcobinamide-GDP ribazoletransferase from Thermosipho melanesiensis (strain DSM 12029 / CIP 104789 / BI429).